An 88-amino-acid chain; its full sequence is Small ribosomal subunit protein uS15 (88 aa).

The protein belongs to the universal ribosomal protein uS15 family. As to quaternary structure, part of the 30S ribosomal subunit. Forms a bridge to the 50S subunit in the 70S ribosome, contacting the 23S rRNA.

Its function is as follows. One of the primary rRNA binding proteins, it binds directly to 16S rRNA where it helps nucleate assembly of the platform of the 30S subunit by binding and bridging several RNA helices of the 16S rRNA. Functionally, forms an intersubunit bridge (bridge B4) with the 23S rRNA of the 50S subunit in the ribosome. This is Small ribosomal subunit protein uS15 from Metamycoplasma arthritidis (strain 158L3-1) (Mycoplasma arthritidis).